The chain runs to 333 residues: tRNA-modifying protein YgfZ (333 aa).

Folate is bound by residues Trp-33 and Trp-195.

The protein belongs to the tRNA-modifying YgfZ family.

The protein resides in the cytoplasm. Its function is as follows. Folate-binding protein involved in regulating the level of ATP-DnaA and in the modification of some tRNAs. It is probably a key factor in regulatory networks that act via tRNA modification, such as initiation of chromosomal replication. The sequence is that of tRNA-modifying protein YgfZ from Pectobacterium carotovorum subsp. carotovorum (strain PC1).